A 132-amino-acid polypeptide reads, in one-letter code: Large ribosomal subunit protein bL17 (132 aa).

The protein belongs to the bacterial ribosomal protein bL17 family. As to quaternary structure, part of the 50S ribosomal subunit. Contacts protein L32.

The protein is Large ribosomal subunit protein bL17 of Ruthia magnifica subsp. Calyptogena magnifica.